The chain runs to 158 residues: Transcription elongation factor GreB (158 aa).

It belongs to the GreA/GreB family. GreB subfamily.

In terms of biological role, necessary for efficient RNA polymerase transcription elongation past template-encoded arresting sites. The arresting sites in DNA have the property of trapping a certain fraction of elongating RNA polymerases that pass through, resulting in locked ternary complexes. Cleavage of the nascent transcript by cleavage factors such as GreA or GreB allows the resumption of elongation from the new 3'terminus. GreB releases sequences of up to 9 nucleotides in length. The sequence is that of Transcription elongation factor GreB from Escherichia coli O157:H7.